Here is a 533-residue protein sequence, read N- to C-terminus: Neuropilin and tolloid-like protein 1 (533 aa).

An N-terminal signal peptide occupies residues 1-22 (MIYGRSLFHIIASLIILHSSGA). The Extracellular segment spans residues 23 to 344 (TKKGTEKQIT…LDQLTNTSGT (322 aa)). 7 disulfides stabilise this stretch: cysteine 41–cysteine 68, cysteine 96–cysteine 118, cysteine 172–cysteine 202, cysteine 229–cysteine 251, cysteine 292–cysteine 304, cysteine 299–cysteine 317, and cysteine 311–cysteine 326. CUB domains follow at residues 41 to 155 (CGTW…YNFT) and 172 to 287 (CEFE…FTSF). The region spanning 291-327 (PCEGNTFFCHSNMCINNTLVCNGLQNCVYPWDENHCK) is the LDL-receptor class A domain. A glycan (N-linked (GlcNAc...) asparagine) is linked at asparagine 306. Asparagine 340 carries an N-linked (GlcNAc...) asparagine glycan. The helical transmembrane segment at 345–365 (VIGVTSCIVIILIIVSVIVQI) threads the bilayer. Over 366–533 (KQPRKKYVQR…HESEYNTTRV (168 aa)) the chain is Cytoplasmic. Tyrosine 417 is subject to Phosphotyrosine. A PDZ-binding motif is present at residues 531 to 533 (TRV).

As to quaternary structure, interacts with PLZ domains of DLG2, DLG3 and DLG4 via its C-terminal TRV domain. Interacts with GRIN2A and GRIN2B via its CUB domains. Expressed only in brain. Present throughout the central nervous system. Highly expressed in the hippocampal CA3 region, olfactory bulb and tubercle, caudate putamen, and neocortex in the adult brain.

It localises to the membrane. Its subcellular location is the postsynaptic density membrane. Its function is as follows. Involved in the development and/or maintenance of neuronal circuitry. Accessory subunit of the neuronal N-methyl-D-aspartate receptor (NMDAR) critical for maintaining the abundance of GRIN2A-containing NMDARs in the postsynaptic density. Regulates long-term NMDA receptor-dependent synaptic plasticity and cognition, at least in the context of spatial learning and memory. This chain is Neuropilin and tolloid-like protein 1 (Neto1), found in Mus musculus (Mouse).